Consider the following 156-residue polypeptide: MSLNATLFAQLVVFFILAWFTMKFVWPPITKALDERASKIADGLAAADRAKTELASANKRVEEQLASVRDENARRLADAEKRALAIVEDAKKRATEEGSKIVAAAKSEAEQQLVQARESLREQVAALAVKGAEQILKREVNAGVHADLLSRLKTEL.

Residues 7–27 (LFAQLVVFFILAWFTMKFVWP) traverse the membrane as a helical segment.

It belongs to the ATPase B chain family. F-type ATPases have 2 components, F(1) - the catalytic core - and F(0) - the membrane proton channel. F(1) has five subunits: alpha(3), beta(3), gamma(1), delta(1), epsilon(1). F(0) has four main subunits: a(1), b(2) and c(10-14). The alpha and beta chains form an alternating ring which encloses part of the gamma chain. F(1) is attached to F(0) by a central stalk formed by the gamma and epsilon chains, while a peripheral stalk is formed by the delta and b chains.

It is found in the cell inner membrane. In terms of biological role, f(1)F(0) ATP synthase produces ATP from ADP in the presence of a proton or sodium gradient. F-type ATPases consist of two structural domains, F(1) containing the extramembraneous catalytic core and F(0) containing the membrane proton channel, linked together by a central stalk and a peripheral stalk. During catalysis, ATP synthesis in the catalytic domain of F(1) is coupled via a rotary mechanism of the central stalk subunits to proton translocation. Component of the F(0) channel, it forms part of the peripheral stalk, linking F(1) to F(0). This Methylibium petroleiphilum (strain ATCC BAA-1232 / LMG 22953 / PM1) protein is ATP synthase subunit b.